The chain runs to 417 residues: Tyrosine--tRNA ligase (417 aa).

Tyr-39 provides a ligand contact to L-tyrosine. A 'HIGH' region motif is present at residues 44-53; that stretch reads PTAASLHAGG. 2 residues coordinate L-tyrosine: Tyr-176 and Gln-180. Positions 236–240 match the 'KMSKS' region motif; the sequence is KMGKS. ATP is bound at residue Lys-239. Positions 350-417 constitute an S4 RNA-binding domain; it reads LGLLTLLVRA…KKKHLLVRPV (68 aa).

This sequence belongs to the class-I aminoacyl-tRNA synthetase family. TyrS type 1 subfamily. Homodimer.

The protein resides in the cytoplasm. The catalysed reaction is tRNA(Tyr) + L-tyrosine + ATP = L-tyrosyl-tRNA(Tyr) + AMP + diphosphate + H(+). Functionally, catalyzes the attachment of tyrosine to tRNA(Tyr) in a two-step reaction: tyrosine is first activated by ATP to form Tyr-AMP and then transferred to the acceptor end of tRNA(Tyr). The sequence is that of Tyrosine--tRNA ligase from Rhizobium meliloti (strain 1021) (Ensifer meliloti).